Here is a 219-residue protein sequence, read N- to C-terminus: Ribose-5-phosphate isomerase A (219 aa).

Substrate-binding positions include 28–31 (SGST), 81–84 (DGAD), and 94–97 (KGGG). The Proton acceptor role is filled by glutamate 103. Residue lysine 121 coordinates substrate.

It belongs to the ribose 5-phosphate isomerase family. Homodimer.

It carries out the reaction aldehydo-D-ribose 5-phosphate = D-ribulose 5-phosphate. It participates in carbohydrate degradation; pentose phosphate pathway; D-ribose 5-phosphate from D-ribulose 5-phosphate (non-oxidative stage): step 1/1. Functionally, catalyzes the reversible conversion of ribose-5-phosphate to ribulose 5-phosphate. This chain is Ribose-5-phosphate isomerase A, found in Histophilus somni (strain 129Pt) (Haemophilus somnus).